The chain runs to 1078 residues: mRNA 3'-end-processing protein rna14 (1078 aa).

Disordered stretches follow at residues 15-209 (AMNA…DTPA) and 222-251 (QSENMQDSAAATPVPDSPSTSKGRLPHDRV). Over residues 42-55 (KTLQDQYSASILDS) the composition is skewed to polar residues. Over residues 58–68 (SEIAPSSASPS) the composition is skewed to low complexity. A compositionally biased stretch (polar residues) spans 82–115 (DPSQPADSAYPSQTPSRADSQASVSAPASGTSVP). The segment covering 126–139 (VEDEDEDDAGDADY) has biased composition (acidic residues). Polar residues-rich tracts occupy residues 151–170 (NTISMNVPQQPISGNANEDT) and 190–206 (FPNSSYTPASAAASKSD). HAT repeat units lie at residues 280–312 (NRIDSAREVYERFLTAFPFSAEQWVAYATMESE), 314–345 (NELYRLEQIFNRTLLTIPDVQLWTVYLDYVRR), 356–391 (QSRRIISSAYDLALQYVGVDKDSGSIWTDYVQFIRS), 405–438 (QKMDLLRKAYQKAICVPTQAVNNLWKEYDQFEMG), 475–508 (TTLPRLPPVLGSDGDIEFGQQVDIWKRWIKWEKG), and 520–552 (AFKARVIYVYKQALMALRFLPEIWFEAAEFCFL). Disordered regions lie at residues 632–663 (ETFAKINPDTQPSKTDDDDDDQSDSKARESMK) and 851–950 (PTVV…QGSP). Residues 879–894 (GTPSSRYPDASVTNSP) show a composition bias toward polar residues. Basic and acidic residues predominate over residues 896–907 (RPLEDFDDEMNR). A compositionally biased stretch (polar residues) spans 931–949 (RTQQVISNQTGSQFRSQGS).

The protein localises to the nucleus. The protein resides in the cytoplasm. Functionally, component of the cleavage factor IA (CFIA) complex, which is involved in the endonucleolytic cleavage during polyadenylation-dependent pre-mRNA 3'-end formation. The polypeptide is mRNA 3'-end-processing protein rna14 (rna14) (Aspergillus oryzae (strain ATCC 42149 / RIB 40) (Yellow koji mold)).